Here is a 726-residue protein sequence, read N- to C-terminus: Probable cadmium-transporting ATPase (726 aa).

The 64-residue stretch at 11–74 folds into the HMA domain; it reads DKQVYRVEGF…AGAFENLKVF (64 aa). Cysteine 22 and cysteine 25 together coordinate Cd(2+). A run of 5 helical transmembrane segments spans residues 105 to 125, 129 to 149, 163 to 179, 335 to 355, and 363 to 383; these read STLL…FVNG, LVTS…LFKV, TLMT…GEWA, IIMV…GGSW, and LAVL…ISIV. Aspartate 414 serves as the catalytic 4-aspartylphosphate intermediate. Helical transmembrane passes span 671–693 and 698–720; these read LNII…LLVI and TLWI…SLRL.

This sequence belongs to the cation transport ATPase (P-type) (TC 3.A.3) family. Type IB subfamily.

It localises to the cell membrane. The enzyme catalyses Cd(2+)(in) + ATP + H2O = Cd(2+)(out) + ADP + phosphate + H(+). Functionally, couples the hydrolysis of ATP with the export of cadmium. This chain is Probable cadmium-transporting ATPase (cadA), found in Staphylococcus aureus (strain MRSA252).